The primary structure comprises 218 residues: Thiamine-phosphate synthase (218 aa).

4-amino-2-methyl-5-(diphosphooxymethyl)pyrimidine-binding positions include 45 to 49 (QYREK) and Asn-77. Mg(2+) contacts are provided by Asp-78 and Asp-97. Ser-116 contributes to the 4-amino-2-methyl-5-(diphosphooxymethyl)pyrimidine binding site. 142–144 (TKT) is a binding site for 2-[(2R,5Z)-2-carboxy-4-methylthiazol-5(2H)-ylidene]ethyl phosphate. Residue Lys-145 coordinates 4-amino-2-methyl-5-(diphosphooxymethyl)pyrimidine. Residues Gly-173 and 193–194 (VT) contribute to the 2-[(2R,5Z)-2-carboxy-4-methylthiazol-5(2H)-ylidene]ethyl phosphate site.

The protein belongs to the thiamine-phosphate synthase family. The cofactor is Mg(2+).

It carries out the reaction 2-[(2R,5Z)-2-carboxy-4-methylthiazol-5(2H)-ylidene]ethyl phosphate + 4-amino-2-methyl-5-(diphosphooxymethyl)pyrimidine + 2 H(+) = thiamine phosphate + CO2 + diphosphate. The enzyme catalyses 2-(2-carboxy-4-methylthiazol-5-yl)ethyl phosphate + 4-amino-2-methyl-5-(diphosphooxymethyl)pyrimidine + 2 H(+) = thiamine phosphate + CO2 + diphosphate. It catalyses the reaction 4-methyl-5-(2-phosphooxyethyl)-thiazole + 4-amino-2-methyl-5-(diphosphooxymethyl)pyrimidine + H(+) = thiamine phosphate + diphosphate. It functions in the pathway cofactor biosynthesis; thiamine diphosphate biosynthesis; thiamine phosphate from 4-amino-2-methyl-5-diphosphomethylpyrimidine and 4-methyl-5-(2-phosphoethyl)-thiazole: step 1/1. Condenses 4-methyl-5-(beta-hydroxyethyl)thiazole monophosphate (THZ-P) and 2-methyl-4-amino-5-hydroxymethyl pyrimidine pyrophosphate (HMP-PP) to form thiamine monophosphate (TMP). The polypeptide is Thiamine-phosphate synthase (Pelotomaculum thermopropionicum (strain DSM 13744 / JCM 10971 / SI)).